We begin with the raw amino-acid sequence, 160 residues long: Eosinophil cationic protein (160 aa).

Positions Met1 to Ala27 are cleaved as a signal peptide. Residues Arg28 to Arg72 form a required for nearly all of the bactericidal activities; partially involved in LPS-binding region. His42 serves as the catalytic Proton acceptor. Disulfide bonds link Cys50–Cys110, Cys64–Cys123, Cys82–Cys138, and Cys89–Cys98. Tyr60 bears the 3'-nitrotyrosine mark. Lys65–Thr69 is a substrate binding site. Residues Asn84, Asn92, and Asn119 are each glycosylated (N-linked (GlcNAc...) asparagine). Catalysis depends on His155, which acts as the Proton donor.

It belongs to the pancreatic ribonuclease family. Interacts with bacterial lipopolysaccharide (LPS) and lipoteichoic acid (LTA). In vitro interacts with phospholipid bilayers.

The protein localises to the secreted. In terms of biological role, cytotoxin and helminthotoxin with low-efficiency ribonuclease activity. Possesses a wide variety of biological activities. Exhibits antibacterial activity. This chain is Eosinophil cationic protein (RNASE3), found in Macaca nemestrina (Pig-tailed macaque).